The sequence spans 249 residues: Aspartate/glutamate leucyltransferase (249 aa).

Belongs to the R-transferase family. Bpt subfamily.

It is found in the cytoplasm. The enzyme catalyses N-terminal L-glutamyl-[protein] + L-leucyl-tRNA(Leu) = N-terminal L-leucyl-L-glutamyl-[protein] + tRNA(Leu) + H(+). It catalyses the reaction N-terminal L-aspartyl-[protein] + L-leucyl-tRNA(Leu) = N-terminal L-leucyl-L-aspartyl-[protein] + tRNA(Leu) + H(+). Functionally, functions in the N-end rule pathway of protein degradation where it conjugates Leu from its aminoacyl-tRNA to the N-termini of proteins containing an N-terminal aspartate or glutamate. The polypeptide is Aspartate/glutamate leucyltransferase (Xanthobacter autotrophicus (strain ATCC BAA-1158 / Py2)).